The following is a 281-amino-acid chain: Diaminopimelate epimerase (281 aa).

Positions 13 and 66 each coordinate substrate. Cys75 acts as the Proton donor in catalysis. Residues 76-77 (GN), Asn164, Asn197, and 215-216 (ER) contribute to the substrate site. The active-site Proton acceptor is Cys224. 225–226 (GT) is a binding site for substrate.

The protein belongs to the diaminopimelate epimerase family. Homodimer.

Its subcellular location is the cytoplasm. It catalyses the reaction (2S,6S)-2,6-diaminopimelate = meso-2,6-diaminopimelate. It functions in the pathway amino-acid biosynthesis; L-lysine biosynthesis via DAP pathway; DL-2,6-diaminopimelate from LL-2,6-diaminopimelate: step 1/1. Catalyzes the stereoinversion of LL-2,6-diaminopimelate (L,L-DAP) to meso-diaminopimelate (meso-DAP), a precursor of L-lysine and an essential component of the bacterial peptidoglycan. The chain is Diaminopimelate epimerase from Gloeothece citriformis (strain PCC 7424) (Cyanothece sp. (strain PCC 7424)).